A 398-amino-acid polypeptide reads, in one-letter code: Dual-specificity RNA methyltransferase RlmN (398 aa).

E121 (proton acceptor) is an active-site residue. A Radical SAM core domain is found at 127 to 370; sequence ETDRGTLCVS…VRTPRGRDIL (244 aa). An intrachain disulfide couples C134 to C373. C141, C145, and C148 together coordinate [4Fe-4S] cluster. S-adenosyl-L-methionine contacts are provided by residues 199-200, S231, 253-255, and N330; these read GE and SLH. C373 (S-methylcysteine intermediate) is an active-site residue.

This sequence belongs to the radical SAM superfamily. RlmN family. [4Fe-4S] cluster serves as cofactor.

Its subcellular location is the cytoplasm. The catalysed reaction is adenosine(2503) in 23S rRNA + 2 reduced [2Fe-2S]-[ferredoxin] + 2 S-adenosyl-L-methionine = 2-methyladenosine(2503) in 23S rRNA + 5'-deoxyadenosine + L-methionine + 2 oxidized [2Fe-2S]-[ferredoxin] + S-adenosyl-L-homocysteine. The enzyme catalyses adenosine(37) in tRNA + 2 reduced [2Fe-2S]-[ferredoxin] + 2 S-adenosyl-L-methionine = 2-methyladenosine(37) in tRNA + 5'-deoxyadenosine + L-methionine + 2 oxidized [2Fe-2S]-[ferredoxin] + S-adenosyl-L-homocysteine. Its function is as follows. Specifically methylates position 2 of adenine 2503 in 23S rRNA and position 2 of adenine 37 in tRNAs. m2A2503 modification seems to play a crucial role in the proofreading step occurring at the peptidyl transferase center and thus would serve to optimize ribosomal fidelity. This chain is Dual-specificity RNA methyltransferase RlmN, found in Rhodopseudomonas palustris (strain BisB5).